Consider the following 162-residue polypeptide: Putative ureidoglycolate lyase (162 aa).

Belongs to the ureidoglycolate lyase family. Homodimer. Requires Ni(2+) as cofactor.

It carries out the reaction (S)-ureidoglycolate = urea + glyoxylate. The protein operates within nitrogen metabolism; (S)-allantoin degradation. Its function is as follows. Catalyzes the catabolism of the allantoin degradation intermediate (S)-ureidoglycolate, generating urea and glyoxylate. Involved in the utilization of allantoin as nitrogen source. The protein is Putative ureidoglycolate lyase of Agrobacterium fabrum (strain C58 / ATCC 33970) (Agrobacterium tumefaciens (strain C58)).